We begin with the raw amino-acid sequence, 416 residues long: Enterobactin exporter EntS (416 aa).

The Cytoplasmic portion of the chain corresponds to 1–21 (MNKQSWLLNLSLLKTHPAFRA). A helical transmembrane segment spans residues 22–42 (VFLARFISIVSLGLLGVAVPV). Topologically, residues 43 to 55 (QIQMMTHSTWQVG) are periplasmic. The chain crosses the membrane as a helical span at residues 56–76 (LSVTLTGGAMFVGLMVGGVLA). Topologically, residues 77–83 (DRYERKK) are cytoplasmic. A helical transmembrane segment spans residues 84-104 (VILLARGTCGIGFIGLCLNAL). At 105–109 (LPEPS) the chain is on the periplasmic side. The chain crosses the membrane as a helical span at residues 110-130 (LLAIYLLGLWDGFFASLGVTA). At 131 to 156 (LLAATPALVGRENLMQAGAITMLTVR) the chain is on the cytoplasmic side. Residues 157–177 (LGSVISPMIGGLLLATGGVAW) traverse the membrane as a helical segment. Position 178 (N178) is a topological domain, periplasmic. The chain crosses the membrane as a helical span at residues 179–199 (YGLAAAGTFITLLPLLSLPAL). The Cytoplasmic portion of the chain corresponds to 200–218 (PPPPQPREHPLKSLLAGFR). Residues 219 to 239 (FLLASPLVGGIALLGGLLTMA) form a helical membrane-spanning segment. The Periplasmic segment spans residues 240–256 (SAVRVLYPALADNWQMS). A helical membrane pass occupies residues 257–277 (AAQIGFLYAAIPLGAAIGALT). Residues 278–287 (SGKLAHSARP) are Cytoplasmic-facing. A helical membrane pass occupies residues 288–307 (GLLMLLSTLGSFLAIGLFGL). Over 308–313 (MPMWIL) the chain is Periplasmic. Residues 314 to 336 (GVVCLALFGWLSAVSSLLQYTML) traverse the membrane as a helical segment. The Cytoplasmic segment spans residues 337–356 (QTQTPEAMLGRINGLWTAQN). A helical membrane pass occupies residues 357-377 (VTGDAIGAALLGGLGAMMTPV). A378 is a topological domain (periplasmic). Residues 379 to 399 (SASASGFGLLIIGVLLLLVLV) traverse the membrane as a helical segment. At 400 to 416 (ELRRFRQTPPQVTASDG) the chain is on the cytoplasmic side.

It belongs to the major facilitator superfamily. EntS (TC 2.A.1.38) family.

It localises to the cell inner membrane. Component of an export pathway for enterobactin. The sequence is that of Enterobactin exporter EntS from Escherichia coli O157:H7.